The following is a 372-amino-acid chain: Anhydro-N-acetylmuramic acid kinase (372 aa).

18-25 (GTSLDGID) contributes to the ATP binding site.

This sequence belongs to the anhydro-N-acetylmuramic acid kinase family.

It catalyses the reaction 1,6-anhydro-N-acetyl-beta-muramate + ATP + H2O = N-acetyl-D-muramate 6-phosphate + ADP + H(+). It functions in the pathway amino-sugar metabolism; 1,6-anhydro-N-acetylmuramate degradation. The protein operates within cell wall biogenesis; peptidoglycan recycling. In terms of biological role, catalyzes the specific phosphorylation of 1,6-anhydro-N-acetylmuramic acid (anhMurNAc) with the simultaneous cleavage of the 1,6-anhydro ring, generating MurNAc-6-P. Is required for the utilization of anhMurNAc either imported from the medium or derived from its own cell wall murein, and thus plays a role in cell wall recycling. The chain is Anhydro-N-acetylmuramic acid kinase from Thiobacillus denitrificans (strain ATCC 25259 / T1).